A 204-amino-acid chain; its full sequence is Leucyl/phenylalanyl-tRNA--protein transferase (204 aa).

It belongs to the L/F-transferase family.

The protein localises to the cytoplasm. It carries out the reaction N-terminal L-lysyl-[protein] + L-leucyl-tRNA(Leu) = N-terminal L-leucyl-L-lysyl-[protein] + tRNA(Leu) + H(+). It catalyses the reaction N-terminal L-arginyl-[protein] + L-leucyl-tRNA(Leu) = N-terminal L-leucyl-L-arginyl-[protein] + tRNA(Leu) + H(+). The catalysed reaction is L-phenylalanyl-tRNA(Phe) + an N-terminal L-alpha-aminoacyl-[protein] = an N-terminal L-phenylalanyl-L-alpha-aminoacyl-[protein] + tRNA(Phe). In terms of biological role, functions in the N-end rule pathway of protein degradation where it conjugates Leu, Phe and, less efficiently, Met from aminoacyl-tRNAs to the N-termini of proteins containing an N-terminal arginine or lysine. The polypeptide is Leucyl/phenylalanyl-tRNA--protein transferase (Rhizobium meliloti (strain 1021) (Ensifer meliloti)).